The primary structure comprises 495 residues: UDP-glycosyltransferase 1 (495 aa).

Histidine 24 serves as the catalytic Proton acceptor. Histidine 24 serves as a coordination point for an anthocyanidin. Aspartate 129 functions as the Charge relay in the catalytic mechanism. UDP-alpha-D-glucose-binding residues include glutamine 358, histidine 373, tryptophan 376, asparagine 377, serine 378, and glutamate 381. Glycine 396 serves as a coordination point for an anthocyanidin. Residues aspartate 397 and glutamine 398 each contribute to the UDP-alpha-D-glucose site.

The protein belongs to the UDP-glycosyltransferase family.

It catalyses the reaction oleanolate + UDP-alpha-D-glucose = oleanolate 3-O-beta-D-glucoside + UDP + H(+). Its function is as follows. Catalyzes the transfer of a glucose (Glc) moiety from UDP-Glc to the C-3 position of the oleanane sapogenins oleanolate and hederagenin. The monoglucosylated hederagenin 3-O-beta-D-glucoside is a feeding deterrent of the yellow-striped flea beetle (Phyllotreta nemorum). The sequence is that of UDP-glycosyltransferase 1 from Barbarea vulgaris (Yellow rocket).